Here is a 227-residue protein sequence, read N- to C-terminus: Probable septum site-determining protein MinC (227 aa).

Belongs to the MinC family. As to quaternary structure, interacts with MinD and FtsZ.

Its function is as follows. Cell division inhibitor that blocks the formation of polar Z ring septums. Rapidly oscillates between the poles of the cell to destabilize FtsZ filaments that have formed before they mature into polar Z rings. Prevents FtsZ polymerization. The chain is Probable septum site-determining protein MinC from Bacillus pumilus (strain SAFR-032).